The following is a 326-amino-acid chain: GTP 3',8-cyclase (326 aa).

The Radical SAM core domain occupies 6–220; that stretch reads SFGRRINYLR…DRISASYELE (215 aa). GTP is bound at residue Arg-15. The [4Fe-4S] cluster site is built by Cys-22 and Cys-26. Position 28 (Tyr-28) interacts with S-adenosyl-L-methionine. A [4Fe-4S] cluster-binding site is contributed by Cys-29. Arg-65 serves as a coordination point for GTP. Position 69 (Gly-69) interacts with S-adenosyl-L-methionine. Residue Thr-96 coordinates GTP. An S-adenosyl-L-methionine-binding site is contributed by Ser-120. A GTP-binding site is contributed by Lys-157. Met-191 contacts S-adenosyl-L-methionine. [4Fe-4S] cluster is bound by residues Cys-254 and Cys-257. 259–261 lines the GTP pocket; the sequence is RVR. Cys-271 lines the [4Fe-4S] cluster pocket.

This sequence belongs to the radical SAM superfamily. MoaA family. As to quaternary structure, monomer and homodimer. [4Fe-4S] cluster is required as a cofactor.

The catalysed reaction is GTP + AH2 + S-adenosyl-L-methionine = (8S)-3',8-cyclo-7,8-dihydroguanosine 5'-triphosphate + 5'-deoxyadenosine + L-methionine + A + H(+). It functions in the pathway cofactor biosynthesis; molybdopterin biosynthesis. Catalyzes the cyclization of GTP to (8S)-3',8-cyclo-7,8-dihydroguanosine 5'-triphosphate. This is GTP 3',8-cyclase from Geobacter sulfurreducens (strain ATCC 51573 / DSM 12127 / PCA).